A 121-amino-acid polypeptide reads, in one-letter code: Large ribosomal subunit protein uL22 (121 aa).

The protein belongs to the universal ribosomal protein uL22 family. As to quaternary structure, part of the 50S ribosomal subunit.

Its function is as follows. This protein binds specifically to 23S rRNA; its binding is stimulated by other ribosomal proteins, e.g. L4, L17, and L20. It is important during the early stages of 50S assembly. It makes multiple contacts with different domains of the 23S rRNA in the assembled 50S subunit and ribosome. In terms of biological role, the globular domain of the protein is located near the polypeptide exit tunnel on the outside of the subunit, while an extended beta-hairpin is found that lines the wall of the exit tunnel in the center of the 70S ribosome. The polypeptide is Large ribosomal subunit protein uL22 (Synechococcus sp. (strain CC9605)).